Consider the following 325-residue polypeptide: Probable tRNA pseudouridine synthase B (325 aa).

Aspartate 69 acts as the Nucleophile in catalysis. The region spanning 236-311 (LPKIVIKDSA…IAADIQRVMM (76 aa)) is the PUA domain.

This sequence belongs to the pseudouridine synthase TruB family. Type 2 subfamily.

It catalyses the reaction uridine(55) in tRNA = pseudouridine(55) in tRNA. Could be responsible for synthesis of pseudouridine from uracil-55 in the psi GC loop of transfer RNAs. In Archaeoglobus fulgidus (strain ATCC 49558 / DSM 4304 / JCM 9628 / NBRC 100126 / VC-16), this protein is Probable tRNA pseudouridine synthase B.